The following is a 186-amino-acid chain: Ribosome-recycling factor (186 aa).

It belongs to the RRF family.

The protein resides in the cytoplasm. Functionally, responsible for the release of ribosomes from messenger RNA at the termination of protein biosynthesis. May increase the efficiency of translation by recycling ribosomes from one round of translation to another. This Cytophaga hutchinsonii (strain ATCC 33406 / DSM 1761 / CIP 103989 / NBRC 15051 / NCIMB 9469 / D465) protein is Ribosome-recycling factor.